Reading from the N-terminus, the 554-residue chain is Undecaprenyl phosphate-alpha-4-amino-4-deoxy-L-arabinose arabinosyl transferase (554 aa).

11 helical membrane-spanning segments follow: residues 4 to 24 (LKDS…LLPV), 87 to 107 (FGSI…ATLL), 115 to 135 (VLAT…TYAV), 178 to 198 (FMTK…PIVI), 206 to 226 (LVVF…PWAL), 262 to 282 (YLPI…GALF), 293 to 313 (ELFF…VAKG), 315 to 335 (LPTY…AYAT), 351 to 371 (VINL…GLGL), 384 to 404 (QKVW…FITL), and 414 to 434 (AAAC…QQVV).

This sequence belongs to the glycosyltransferase 83 family.

The protein localises to the cell inner membrane. It carries out the reaction 4-amino-4-deoxy-alpha-L-arabinopyranosyl di-trans,octa-cis-undecaprenyl phosphate + lipid IVA = lipid IIA + di-trans,octa-cis-undecaprenyl phosphate.. Its pathway is lipopolysaccharide metabolism; 4-amino-4-deoxy-beta-L-arabinose-lipid A biosynthesis. Its function is as follows. Catalyzes the transfer of the L-Ara4N moiety of the glycolipid undecaprenyl phosphate-alpha-L-Ara4N to lipid A. The modified arabinose is attached to lipid A and is required for resistance to polymyxin and cationic antimicrobial peptides. The polypeptide is Undecaprenyl phosphate-alpha-4-amino-4-deoxy-L-arabinose arabinosyl transferase (Yersinia pseudotuberculosis serotype O:1b (strain IP 31758)).